The chain runs to 205 residues: Mitotic spindle assembly checkpoint protein MAD2A (205 aa).

Ala-2 carries the post-translational modification N-acetylalanine. The 184-residue stretch at 14 to 197 (RGSAEIVAEF…TTIHKVNSMV (184 aa)) folds into the HORMA domain. Phosphoserine is present on residues Ser-130, Ser-170, Ser-185, and Ser-195. The required for assuming the closed conformation and for interaction with CDC20 stretch occupies residues 195–205 (SMVAYKTPVND).

It belongs to the MAD2 family. As to quaternary structure, monomer and homodimer. Heterodimerizes with MAD2L1 in order to form a tetrameric MAD1L1-MAD2L1 core complex. In the closed and open conformation, interacts with MAD1L1. Formation of a heterotetrameric core complex containing two molecules each of MAD1L1 and of MAD2L1 promotes binding of another molecule of MAD2L1 to each MAD2L1, resulting in a heterohexamer. Interacts with MAD2L1BP. Interacts with ADAM17/TACE. Interacts with CDC20. Dimeric MAD2L1 in the closed conformation interacts with CDC20. Monomeric MAD2L1 in the open conformation does not interact with CDC20. CDC20 competes with MAD1L1 for MAD2L1 binding. In the closed conformation, interacts with BUB1B. Interacts with TTK. Interacts with TPR. Binds to UBD (via ubiquitin-like 1 domain) during mitosis. Interacts with isoform 1 and isoform 2 of NEK2. Interacts with HSF1; this interaction occurs in mitosis. In terms of processing, phosphorylated on multiple serine residues. The level of phosphorylation varies during the cell cycle and is highest during mitosis. Phosphorylation abolishes interaction with MAD1L1 and reduces interaction with CDC20. Phosphorylated by NEK2.

It localises to the nucleus. Its subcellular location is the chromosome. The protein resides in the centromere. It is found in the kinetochore. The protein localises to the cytoplasm. It localises to the cytoskeleton. Its subcellular location is the spindle pole. Component of the spindle-assembly checkpoint that prevents the onset of anaphase until all chromosomes are properly aligned at the metaphase plate. In the closed conformation (C-MAD2) forms a heterotetrameric complex with MAD1L1 at unattached kinetochores during prometaphase, and recruits an open conformation of MAD2L1 (O-MAD2) which then promotes the conversion of O-MAD2 to C-MAD2. Required for the execution of the mitotic checkpoint which monitors the process of kinetochore-spindle attachment and inhibits the activity of the anaphase promoting complex by sequestering CDC20 until all chromosomes are aligned at the metaphase plate. This is Mitotic spindle assembly checkpoint protein MAD2A (Mad2l1) from Mus musculus (Mouse).